The primary structure comprises 196 residues: Orotate phosphoribosyltransferase (196 aa).

117–125 (EDIVTTGLS) provides a ligand contact to 5-phospho-alpha-D-ribose 1-diphosphate. 2 residues coordinate orotate: Thr121 and Arg149.

It belongs to the purine/pyrimidine phosphoribosyltransferase family. PyrE subfamily. Homodimer. The cofactor is Mg(2+).

The enzyme catalyses orotidine 5'-phosphate + diphosphate = orotate + 5-phospho-alpha-D-ribose 1-diphosphate. It participates in pyrimidine metabolism; UMP biosynthesis via de novo pathway; UMP from orotate: step 1/2. In terms of biological role, catalyzes the transfer of a ribosyl phosphate group from 5-phosphoribose 1-diphosphate to orotate, leading to the formation of orotidine monophosphate (OMP). The polypeptide is Orotate phosphoribosyltransferase (Methylorubrum populi (strain ATCC BAA-705 / NCIMB 13946 / BJ001) (Methylobacterium populi)).